We begin with the raw amino-acid sequence, 192 residues long: Xanthine phosphoribosyltransferase (192 aa).

Residues leucine 20 and asparagine 27 each contribute to the xanthine site. A 5-phospho-alpha-D-ribose 1-diphosphate-binding site is contributed by 128–132 (AQGEA). A xanthine-binding site is contributed by lysine 156.

The protein belongs to the purine/pyrimidine phosphoribosyltransferase family. Xpt subfamily. Homodimer.

The protein localises to the cytoplasm. It catalyses the reaction XMP + diphosphate = xanthine + 5-phospho-alpha-D-ribose 1-diphosphate. Its pathway is purine metabolism; XMP biosynthesis via salvage pathway; XMP from xanthine: step 1/1. Converts the preformed base xanthine, a product of nucleic acid breakdown, to xanthosine 5'-monophosphate (XMP), so it can be reused for RNA or DNA synthesis. This chain is Xanthine phosphoribosyltransferase, found in Lactobacillus helveticus (strain DPC 4571).